The primary structure comprises 429 residues: 26S proteasome regulatory subunit RPN7 (429 aa).

2 positions are modified to phosphoserine: Ser8 and Ser77. One copy of the TPR repeat lies at 131-164 (AQAWINLGEYYAQIGDKDNAEKTLGKSLSKAIST). Residues 223 to 395 (NFKEAAKLLV…GIVETNRPDN (173 aa)) enclose the PCI domain.

The 26S proteasome is composed of a core protease, known as the 20S proteasome, capped at one or both ends by the 19S regulatory complex (RC). The RC is composed of at least 18 different subunits in two subcomplexes, the base and the lid, which form the portions proximal and distal to the 20S proteolytic core, respectively. Component of the lid subcomplex of the 19S RC.

It is found in the nucleus. Its function is as follows. Component of the 19S cap proteasome complex which acts as a regulatory subunit of the 26S proteasome, involved in the ATP-dependent degradation of ubiquitinated proteins. This chain is 26S proteasome regulatory subunit RPN7, found in Saccharomyces cerevisiae (strain ATCC 204508 / S288c) (Baker's yeast).